The chain runs to 370 residues: Vasopressin V2 receptor (370 aa).

The span at 1–21 (MFMASTTSAVPWHLSQPTPAG) shows a compositional bias: polar residues. The disordered stretch occupies residues 1–26 (MFMASTTSAVPWHLSQPTPAGNGSEG). The Extracellular segment spans residues 1–38 (MFMASTTSAVPWHLSQPTPAGNGSEGELLTARDPLLAQ). N-linked (GlcNAc...) asparagine glycosylation occurs at N22. The helical transmembrane segment at 39–63 (AELALLSTVFVAVALSNGLVLGALV) threads the bilayer. Topologically, residues 64-77 (RRGRRGRWAPMHVF) are cytoplasmic. The chain crosses the membrane as a helical span at residues 78-98 (IGHLCLADLAVALFQVLPQLA). Topologically, residues 99–113 (WDATDRFRGPDALCR) are extracellular. The helical transmembrane segment at 114 to 135 (AVKYLQMVGMYASSYMILAMTL) threads the bilayer. The Cytoplasmic portion of the chain corresponds to 136–159 (DRHRAICRPMLAHRHGGGTHWNRP). A helical transmembrane segment spans residues 160–180 (VLLAWAFSLLFSLPQLFIFAQ). Topologically, residues 181–199 (RDVDGSGVLDCWARFAEPW) are extracellular. A helical membrane pass occupies residues 200-219 (GLRAYVTWIALMVFVAPALG). Residues 220–270 (IAACQVLIFREIHASLGPGPVPRAGGPRRGCRPGSPAEGARVSAAVAKTVK) are Cytoplasmic-facing. The chain crosses the membrane as a helical span at residues 271 to 292 (MTLVIVIVYVLCWAPFFLVQLW). Over 293–307 (AAWDPEAPREGPPFV) the chain is Extracellular. A helical transmembrane segment spans residues 308–327 (LLMLLASLNSCTNPWIYASF). The Cytoplasmic portion of the chain corresponds to 328–370 (SSSISSELRSLLCCTWRRAPPSPGPQEESCATASSFLAKDTPS). Residues C340 and C341 are each lipidated (S-palmitoyl cysteine). The tract at residues 347–370 (PPSPGPQEESCATASSFLAKDTPS) is disordered.

This sequence belongs to the G-protein coupled receptor 1 family. Vasopressin/oxytocin receptor subfamily. As to quaternary structure, interacts with ARRDC4. Identified in a complex containing at least ARRDC4, V2R and HGS. Interacts with TMEM147.

It localises to the cell membrane. Receptor for arginine vasopressin. The activity of this receptor is mediated by G proteins which activate adenylate cyclase. Involved in renal water reabsorption. This Bos taurus (Bovine) protein is Vasopressin V2 receptor (AVPR2).